Reading from the N-terminus, the 394-residue chain is Elongation factor Tu 1 (394 aa).

The region spanning 10–204 (KPHVNVGTIG…ALDTYIPEPA (195 aa)) is the tr-type G domain. The tract at residues 19-26 (GHVDHGKT) is G1. 19–26 (GHVDHGKT) contacts GTP. Threonine 26 contacts Mg(2+). The G2 stretch occupies residues 60–64 (GITIN). The G3 stretch occupies residues 81–84 (DCPG). GTP is bound by residues 81-85 (DCPGH) and 136-139 (NKCD). Residues 136–139 (NKCD) form a G4 region. A G5 region spans residues 174-176 (SAL).

Belongs to the TRAFAC class translation factor GTPase superfamily. Classic translation factor GTPase family. EF-Tu/EF-1A subfamily. Monomer.

It is found in the cytoplasm. The catalysed reaction is GTP + H2O = GDP + phosphate + H(+). Functionally, GTP hydrolase that promotes the GTP-dependent binding of aminoacyl-tRNA to the A-site of ribosomes during protein biosynthesis. In Shewanella frigidimarina (strain NCIMB 400), this protein is Elongation factor Tu 1.